The following is a 43-amino-acid chain: Truncated K3L homolog (43 aa).

It belongs to the orthopoxvirus OPG041 family.

This chain is Truncated K3L homolog (OPG041), found in Cynomys gunnisoni (Gunnison's prairie dog).